The sequence spans 603 residues: UvrABC system protein C (603 aa).

One can recognise a GIY-YIG domain in the interval 15-92; it reads DQPGCYLMKD…IKKHDPRFNI (78 aa). The UVR domain occupies 197–232; the sequence is KTVKNDLMKKMQEAAENMEFEKAGEFRDQINAIETT.

The protein belongs to the UvrC family. In terms of assembly, interacts with UvrB in an incision complex.

It is found in the cytoplasm. Its function is as follows. The UvrABC repair system catalyzes the recognition and processing of DNA lesions. UvrC both incises the 5' and 3' sides of the lesion. The N-terminal half is responsible for the 3' incision and the C-terminal half is responsible for the 5' incision. The protein is UvrABC system protein C of Listeria monocytogenes serovar 1/2a (strain ATCC BAA-679 / EGD-e).